Here is a 284-residue protein sequence, read N- to C-terminus: Acetyl-coenzyme A carboxylase carboxyl transferase subunit beta (284 aa).

The CoA carboxyltransferase N-terminal domain maps to 27–284; it reads LMTKCPSCKY…ELHDGGVRHV (258 aa). Residues Cys-31, Cys-34, Cys-50, and Cys-52 each coordinate Zn(2+). The segment at 31–52 adopts a C4-type zinc-finger fold; the sequence is CPSCKYMHYTKQLNENHKVCDC.

It belongs to the AccD/PCCB family. Acetyl-CoA carboxylase is a heterohexamer composed of biotin carboxyl carrier protein (AccB), biotin carboxylase (AccC) and two subunits each of ACCase subunit alpha (AccA) and ACCase subunit beta (AccD). Zn(2+) serves as cofactor.

Its subcellular location is the cytoplasm. It carries out the reaction N(6)-carboxybiotinyl-L-lysyl-[protein] + acetyl-CoA = N(6)-biotinyl-L-lysyl-[protein] + malonyl-CoA. Its pathway is lipid metabolism; malonyl-CoA biosynthesis; malonyl-CoA from acetyl-CoA: step 1/1. Functionally, component of the acetyl coenzyme A carboxylase (ACC) complex. Biotin carboxylase (BC) catalyzes the carboxylation of biotin on its carrier protein (BCCP) and then the CO(2) group is transferred by the transcarboxylase to acetyl-CoA to form malonyl-CoA. The sequence is that of Acetyl-coenzyme A carboxylase carboxyl transferase subunit beta from Exiguobacterium sp. (strain ATCC BAA-1283 / AT1b).